A 236-amino-acid chain; its full sequence is MSYNLTDPYEIARFIKESKKSTPVKVYVNGDLSKALMDDIEWYGANGFYILIGESDLIAKIILDNKHLIKHFRLENDRRNSAIPMLDLLEVDARIEPGAIIRDKVTIGKNAVVMMGAVINIGAEIGDGTMVDMNAVIGARGKLGKNVHLGAGAVVAGVLEPPSKEPCTIGDNVLIGANSVILEGVRIGSGSVVAAGSVVAEDVPEGVVVAGSPAKIIKLVDDKTKGKTQLLDDLRK.

This sequence belongs to the transferase hexapeptide repeat family. DapH subfamily.

It catalyses the reaction (S)-2,3,4,5-tetrahydrodipicolinate + acetyl-CoA + H2O = L-2-acetamido-6-oxoheptanedioate + CoA. It functions in the pathway amino-acid biosynthesis; L-lysine biosynthesis via DAP pathway; LL-2,6-diaminopimelate from (S)-tetrahydrodipicolinate (acetylase route): step 1/3. Functionally, catalyzes the transfer of an acetyl group from acetyl-CoA to tetrahydrodipicolinate. This Clostridium botulinum (strain Eklund 17B / Type B) protein is 2,3,4,5-tetrahydropyridine-2,6-dicarboxylate N-acetyltransferase.